The chain runs to 758 residues: MVTIHNLGFPRIGRHRELKFALEKYWSNAISQDELLQTASTLCKQYWQNQNKLDWVPVGDFSFYDHVLDMSFLLGNIPKRAENLSDNELDNYFRVARGRAFINESERTCIQAGEMTKWFDTNYHYIVPEFSQETNFALQAQRLIAQIRQAQAQGVKVKPVVIGPVTYLWLGKSKDKINKLDLLDSLVKVYTQLFDELVKLGIEWIQVDEPILVTELETDWQVAFRKAYDILANSPIKLLLVSYFGTLQDNLSFACGLPIDGLHIDAINAKDEVQLLIDSLSDDKILSLGVVNGRNIWKTDLSTTLLWLEPIHQQLQNRLWLAPSCSLLHVPVDLDSEQELNDDIKSWLGFAVQKLEELSLLAQALNQGQASVTKEIANNIDAINSKKYSPLVHNAKVKERIAKVNDELGNRQSDYKSRTKLQSEKFNLPLYPTTTIGSFPQTLEIRQARHDYKLGKLSAEQYMQTMRSEIRYCVQVQEHLGLDVLVHGEPERNDMVEYFGQQLSGYVFSQFGWVQSYGSRCVKPPIIFGDIFRPKPMTLDWITYAQSLTNKPMKGMITGPVTMLNWSFVRDDQPRATTCLQLSLAIRDEVLDLEKSNINIIQIDEAALREGLPLRKSQWQTYLDWAIRAYRVSANGVSDETQIHTHMCYSEFNDIIEAIAQMDADVITIETSRSDMELLDIFDEFDYPNEIGPGVYDIHSPNIPSVDSIVELMQKAAKYIPIKRLWVNPDCGLKTRHWDEVNLALTNMVLASQQLRKN.

5-methyltetrahydropteroyltri-L-glutamate-binding positions include 16-19 (RELK) and Lys117. Residues 436–438 (IGS) and Glu489 contribute to the L-homocysteine site. L-methionine-binding positions include 436–438 (IGS) and Glu489. Residues 520–521 (RC) and Trp566 contribute to the 5-methyltetrahydropteroyltri-L-glutamate site. Asp604 is an L-homocysteine binding site. Asp604 provides a ligand contact to L-methionine. Glu610 contacts 5-methyltetrahydropteroyltri-L-glutamate. The Zn(2+) site is built by His646, Cys648, and Glu670. The active-site Proton donor is the His699. Position 731 (Cys731) interacts with Zn(2+).

The protein belongs to the vitamin-B12 independent methionine synthase family. Requires Zn(2+) as cofactor.

The catalysed reaction is 5-methyltetrahydropteroyltri-L-glutamate + L-homocysteine = tetrahydropteroyltri-L-glutamate + L-methionine. It participates in amino-acid biosynthesis; L-methionine biosynthesis via de novo pathway; L-methionine from L-homocysteine (MetE route): step 1/1. Functionally, catalyzes the transfer of a methyl group from 5-methyltetrahydrofolate to homocysteine resulting in methionine formation. The protein is 5-methyltetrahydropteroyltriglutamate--homocysteine methyltransferase of Ruthia magnifica subsp. Calyptogena magnifica.